The following is a 63-amino-acid chain: MADAKTIKIEQIGSPIRRHHSQRETLIGLKLNKIGRVTELPDTPAVRGMITKVHHLVRIVDEK.

The protein belongs to the universal ribosomal protein uL30 family. As to quaternary structure, part of the 50S ribosomal subunit.

The protein is Large ribosomal subunit protein uL30 of Bradyrhizobium sp. (strain BTAi1 / ATCC BAA-1182).